The sequence spans 123 residues: Small ribosomal subunit protein bS16 (123 aa).

Residues 87 to 123 (AKNNPIKAKPGKRAQERAAEKAQKAADAAAAAADAAE) form a disordered region. Over residues 99-110 (RAQERAAEKAQK) the composition is skewed to basic and acidic residues. The span at 111 to 123 (AADAAAAAADAAE) shows a compositional bias: low complexity.

This sequence belongs to the bacterial ribosomal protein bS16 family.

This is Small ribosomal subunit protein bS16 from Rhizobium etli (strain CIAT 652).